The chain runs to 149 residues: Transcription factor HY5-like (149 aa).

The segment at 1–77 (MSLQRPNGNS…RRRGRNPVDK (77 aa)) is disordered. Residues 23 to 36 (ESDEELLMVPDMEA) form an interaction with COP1 region. Ser24 is subject to Phosphoserine. Positions 55–64 (ELDQTQNGVS) are enriched in polar residues. The region spanning 78–141 (EYRSLKRLLR…TMLRKMLINT (64 aa)) is the bZIP domain. A basic motif region spans residues 80 to 100 (RSLKRLLRNRVSAQQARERKK). The interval 106–134 (LESRANELQNNNDQLEEKISTLTNENTML) is leucine-zipper.

This sequence belongs to the bZIP family. Heterodimer; heterodimerizes with HY5 via the leucine-zipper domains. Interacts with COP1 WD40 domain. Interacts with BBX24/STO and BBX25/STH. Ubiquitinated by COP1. Ubiquitination takes place in darkness and leads to its subsequent degradation, thereby preventing the activation of photomorphogenesis signals.

The protein localises to the nucleus. In terms of biological role, transcription factor that promotes photomorphogenesis in light. Acts downstream of the light receptor network and directly affects transcription of light-induced genes. Specifically involved in the blue light specific pathway, suggesting that it participates in transmission of cryptochromes (CRY1 and CRY2) signals to downstream responses. In darkness, its degradation prevents the activation of light-induced genes. In Arabidopsis thaliana (Mouse-ear cress), this protein is Transcription factor HY5-like (HYH).